Here is a 739-residue protein sequence, read N- to C-terminus: MSLMLEPNPTQIKEERIYAEMGLTDEEFAMIEKILGRLPNYTETGLFSVMWSEHCSYKNSKPVLRKFPTTGERVLQGPGEGAGIVDIGDNQAVVFKMESHNHPSAIEPYQGAATGVGGIIRDIFSMGARPVALLNSLRFGELQSPRVKYLFEEVVAGIAGYGNCIGIPTVGGEVQFDPCYEGNPLVNAMCVGLIHHEDIKKGQAHGAGNTVMYVGASTGRDGIHGATFASEELSESSEAKRPAVQVGDPFMEKLLIEACLELIQSDALVGIQDMGAAGLTSSSAEMASKAGMGIEMYLDDVPQRETGMTPYEMMLSESQERMLIVVKKGREQEVVELFEKYGLAAVAMGKVTEDKMLRLFHKGEMVAEVPADALAEEAPIYHKPSKEAAYFREFQEMKMKTPKVDNYKETLLALLQQPTIASKEWVYDQYDYQVRTSTVVTPGSDAAVVRVRGTEKALAITTDCNSRYIYLDPETGGKIAVAEAARNIVCSGGEPLAITDCLNFGNPEKPEIFWQIEKSVDGMSEACRTLQTPVIGGNVSMYNERSGEAVYPTPTVGMVGLVHDLKHVTTQEFKQAGDLIYVMGETKAEFGGSELQKMMYGKIFGQSPSIDLEVEAKRQKQLLEAIQAGLVQSAHDVAEGGLAVAIAESAIGAKGLGATVKLAGEATAALFAESQSRFVVTVKREQQEAFEKVVEAIQVGEVTNTNEVTIHNEENEVLLTANVDEMRKAWKGAIPCLLK.

His54 is a catalytic residue. 2 residues coordinate ATP: Tyr57 and Lys96. Glu98 lines the Mg(2+) pocket. Substrate contacts are provided by residues 99-102 and Arg121; that span reads SHNH. His100 acts as the Proton acceptor in catalysis. Asp122 lines the Mg(2+) pocket. A substrate-binding site is contributed by Gln245. Asp273 contributes to the Mg(2+) binding site. Residue 317 to 319 coordinates substrate; that stretch reads ESQ. ATP is bound by residues Asp500 and Gly537. Asn538 contacts Mg(2+). Ser540 lines the substrate pocket.

This sequence belongs to the FGAMS family. Monomer. Part of the FGAM synthase complex composed of 1 PurL, 1 PurQ and 2 PurS subunits.

The protein resides in the cytoplasm. The enzyme catalyses N(2)-formyl-N(1)-(5-phospho-beta-D-ribosyl)glycinamide + L-glutamine + ATP + H2O = 2-formamido-N(1)-(5-O-phospho-beta-D-ribosyl)acetamidine + L-glutamate + ADP + phosphate + H(+). It functions in the pathway purine metabolism; IMP biosynthesis via de novo pathway; 5-amino-1-(5-phospho-D-ribosyl)imidazole from N(2)-formyl-N(1)-(5-phospho-D-ribosyl)glycinamide: step 1/2. Its function is as follows. Part of the phosphoribosylformylglycinamidine synthase complex involved in the purines biosynthetic pathway. Catalyzes the ATP-dependent conversion of formylglycinamide ribonucleotide (FGAR) and glutamine to yield formylglycinamidine ribonucleotide (FGAM) and glutamate. The FGAM synthase complex is composed of three subunits. PurQ produces an ammonia molecule by converting glutamine to glutamate. PurL transfers the ammonia molecule to FGAR to form FGAM in an ATP-dependent manner. PurS interacts with PurQ and PurL and is thought to assist in the transfer of the ammonia molecule from PurQ to PurL. The protein is Phosphoribosylformylglycinamidine synthase subunit PurL of Bacillus cytotoxicus (strain DSM 22905 / CIP 110041 / 391-98 / NVH 391-98).